Reading from the N-terminus, the 132-residue chain is ATP synthase epsilon chain, chloroplastic (132 aa).

This sequence belongs to the ATPase epsilon chain family. In terms of assembly, F-type ATPases have 2 components, CF(1) - the catalytic core - and CF(0) - the membrane proton channel. CF(1) has five subunits: alpha(3), beta(3), gamma(1), delta(1), epsilon(1). CF(0) has three main subunits: a, b and c.

It localises to the plastid. Its subcellular location is the chloroplast thylakoid membrane. In terms of biological role, produces ATP from ADP in the presence of a proton gradient across the membrane. This chain is ATP synthase epsilon chain, chloroplastic, found in Adiantum capillus-veneris (Maidenhair fern).